A 455-amino-acid polypeptide reads, in one-letter code: tRNA modification GTPase MnmE (455 aa).

The (6S)-5-formyl-5,6,7,8-tetrahydrofolate site is built by Arg-26, Glu-86, and Arg-125. In terms of domain architecture, TrmE-type G spans 222–376 (GLKTAIIGRP…VEEKINQIFF (155 aa)). Residue Asn-232 coordinates K(+). GTP contacts are provided by residues 232–237 (NVGKSS), 251–257 (TDIAGTT), and 276–279 (DTAG). Ser-236 contacts Mg(2+). K(+) is bound by residues Thr-251, Ile-253, and Thr-256. Thr-257 is a Mg(2+) binding site. Lys-455 is a (6S)-5-formyl-5,6,7,8-tetrahydrofolate binding site.

This sequence belongs to the TRAFAC class TrmE-Era-EngA-EngB-Septin-like GTPase superfamily. TrmE GTPase family. As to quaternary structure, homodimer. Heterotetramer of two MnmE and two MnmG subunits. K(+) is required as a cofactor.

The protein resides in the cytoplasm. Functionally, exhibits a very high intrinsic GTPase hydrolysis rate. Involved in the addition of a carboxymethylaminomethyl (cmnm) group at the wobble position (U34) of certain tRNAs, forming tRNA-cmnm(5)s(2)U34. The chain is tRNA modification GTPase MnmE from Lactococcus lactis subsp. cremoris (strain MG1363).